Here is a 241-residue protein sequence, read N- to C-terminus: Centromere protein H (241 aa).

M1 carries the N-acetylmethionine modification. The interval 1-24 (MEEQPRERSEAGAEACEEKRGLSQ) is disordered. Residues 28 to 186 (ERIEDRISLL…KEDVDKMENS (159 aa)) are a coiled coil. K61 participates in a covalent cross-link: Glycyl lysine isopeptide (Lys-Gly) (interchain with G-Cter in SUMO2). A Phosphothreonine modification is found at T62.

The protein belongs to the CENP-H/MCM16 family. Self-associates. Component of the CENPA-NAC complex, at least composed of CENPA, CENPC, CENPH, CENPM, CENPN, CENPT and CENPU. The CENPA-NAC complex interacts with the CENPA-CAD complex, composed of CENPI, CENPK, CENPL, CENPO, CENPP, CENPQ, CENPR and CENPS. Interacts directly with CENPK. Interacts with KIF2C and NDC80. Interacts with TRIM36. Abundantly expressed in thymus, spleen, uterus, ovary, testis and muscle, and weakly expressed in small intestine, lung and stomach. Barely detectable expression in kidney, liver, skin and prostate gland. Not detected in brain, heart or adrenal gland. Also expressed weakly in various hematopoietic cell lines.

The protein resides in the nucleus. It localises to the chromosome. Its subcellular location is the centromere. It is found in the kinetochore. Functionally, component of the CENPA-NAC (nucleosome-associated) complex, a complex that plays a central role in assembly of kinetochore proteins, mitotic progression and chromosome segregation. The CENPA-NAC complex recruits the CENPA-CAD (nucleosome distal) complex and may be involved in incorporation of newly synthesized CENPA into centromeres. Required for chromosome congression and efficiently align the chromosomes on a metaphase plate. This Mus musculus (Mouse) protein is Centromere protein H.